The primary structure comprises 164 residues: MDRFVSHFTNRLDAKGRVSIPASFRAVLARDGFEGLYVHPSIDAEAIDCGGHGLLREIDELLGRLSPYSEERDMFSTALLGTSEILKVDSEGRVVLTENVKTYAGIGSEVTFVGQGYKFQIWEPGRFRTHLEEARNRVRDLRKQLSSRPVAPDAQPPRPHGARE.

SpoVT-AbrB domains follow at residues 7-60 and 83-126; these read HFTN…EIDE and SEIL…EPGR. A disordered region spans residues 141–164; that stretch reads LRKQLSSRPVAPDAQPPRPHGARE. Pro residues predominate over residues 154–164; the sequence is AQPPRPHGARE.

The protein belongs to the MraZ family. Forms oligomers.

It is found in the cytoplasm. The protein localises to the nucleoid. This chain is Transcriptional regulator MraZ, found in Beijerinckia indica subsp. indica (strain ATCC 9039 / DSM 1715 / NCIMB 8712).